A 203-amino-acid chain; its full sequence is NAD(P)H dehydrogenase (quinone) (203 aa).

Positions 3 to 194 (VLIVYYSMYG…AGARFQGRYV (192 aa)) constitute a Flavodoxin-like domain. Residues 9-14 (SMYGHI) and 82-84 (TRF) contribute to the FMN site. NAD(+) is bound at residue Y11. A substrate-binding site is contributed by W102. Residues 117–123 (SSATQHG) and H138 contribute to the FMN site.

This sequence belongs to the WrbA family. FMN is required as a cofactor.

The enzyme catalyses a quinone + NADH + H(+) = a quinol + NAD(+). It carries out the reaction a quinone + NADPH + H(+) = a quinol + NADP(+). This Geobacter sulfurreducens (strain ATCC 51573 / DSM 12127 / PCA) protein is NAD(P)H dehydrogenase (quinone).